Here is a 122-residue protein sequence, read N- to C-terminus: Large ribosomal subunit protein uL14 (122 aa).

The protein belongs to the universal ribosomal protein uL14 family. Part of the 50S ribosomal subunit. Forms a cluster with proteins L3 and L19. In the 70S ribosome, L14 and L19 interact and together make contacts with the 16S rRNA in bridges B5 and B8.

Its function is as follows. Binds to 23S rRNA. Forms part of two intersubunit bridges in the 70S ribosome. In Methylobacterium sp. (strain 4-46), this protein is Large ribosomal subunit protein uL14.